The following is a 954-amino-acid chain: Bifunctional endo-1,4-beta-xylanase XylA (954 aa).

A signal peptide (or 28, or 29) is located at residues 1 to 27 (MKLSKIKKVLSGTVSALMIASAAPVVA). The region spanning 29–236 (AADQQTRGNV…SNGSANVKSV (208 aa)) is the GH11 domain. Residue E122 is the Nucleophile of the active site. E223 serves as the catalytic Proton donor. The span at 233–243 (VKSVSVTQGGS) shows a compositional bias: polar residues. A disordered region spans residues 233-628 (VKSVSVTQGG…NNNNSAGSSD (396 aa)). A compositionally biased stretch (low complexity) spans 246-622 (NGGQQQNNDW…WNQGQQNNNN (377 aa)). In terms of domain architecture, GH10 spans 624-952 (AGSSDSLKGA…KPAYDRVMAL (329 aa)). The active-site Proton donor is the E774. E884 functions as the Nucleophile in the catalytic mechanism.

This sequence in the N-terminal section; belongs to the glycosyl hydrolase 11 (cellulase G) family. In the C-terminal section; belongs to the glycosyl hydrolase 10 (cellulase F) family.

It catalyses the reaction Endohydrolysis of (1-&gt;4)-beta-D-xylosidic linkages in xylans.. It functions in the pathway glycan degradation; xylan degradation. In terms of biological role, xylanase domain releases more xylo-oligosaccharides and GH10 domain more xylose. This is Bifunctional endo-1,4-beta-xylanase XylA (xynA) from Ruminococcus flavefaciens.